A 655-amino-acid polypeptide reads, in one-letter code: SRSF protein kinase 1 (655 aa).

Residues 1–57 (MERKVLALQARKKRTKAKKDKAQRKPETQHRGSAPHSESDLPEQEEEILGSDDDEQE) form a disordered region. Basic residues predominate over residues 10–22 (ARKKRTKAKKDKA). Positions 40-57 (DLPEQEEEILGSDDDEQE) are enriched in acidic residues. S51 carries the post-translational modification Phosphoserine; by CK2. The Protein kinase domain maps to 80-653 (YHVIRKLGWG…AAECLRHPWL (574 aa)). ATP-binding positions include 86–94 (LGWGHFSTV) and K109. D213 serves as the catalytic Proton acceptor. 2 disordered regions span residues 238–341 (WQRS…QDQT) and 397–417 (FLSS…CTPI). A compositionally biased stretch (basic residues) spans 265–276 (KNKKKKLKKKQK). 2 stretches are compositionally biased toward basic and acidic residues: residues 277–288 (RQAELLEKRMQE) and 304–318 (NKQE…RPLK). A phosphoserine mark is found at S309, S311, and S333. S555 carries the post-translational modification Phosphoserine; by CK2.

Belongs to the protein kinase superfamily. CMGC Ser/Thr protein kinase family. As to quaternary structure, monomer. Found in a multisubunit complex containing seven proteins, named toposome, which separates entangled circular chromatin DNA during chromosome segregation. Interacts with HHV-1 ICP27 protein. Interacts with DNAJC8 and AHSA1/AHA1 and this mediates formation of a complex with the Hsp70 /Hsp90 machinery. Binds to IGF2BP1, SYNCRIP, HNRNPA2B1 and HNRNPC. Interacts with SAFB/SAFB1 and SAFB2 which inhibits its activity. Requires Mg(2+) as cofactor.

The protein resides in the cytoplasm. Its subcellular location is the nucleus. It localises to the nucleoplasm. It is found in the nucleus matrix. The protein localises to the microsome. The protein resides in the nucleus speckle. Its subcellular location is the chromosome. The catalysed reaction is L-seryl-[protein] + ATP = O-phospho-L-seryl-[protein] + ADP + H(+). It catalyses the reaction L-threonyl-[protein] + ATP = O-phospho-L-threonyl-[protein] + ADP + H(+). With respect to regulation, activated by phosphorylation on Ser-51 and Ser-555. Serine/arginine-rich protein-specific kinase which specifically phosphorylates its substrates at serine residues located in regions rich in arginine/serine dipeptides, known as RS domains and is involved in the phosphorylation of SR splicing factors and the regulation of splicing. Plays a central role in the regulatory network for splicing, controlling the intranuclear distribution of splicing factors in interphase cells and the reorganization of nuclear speckles during mitosis. Can influence additional steps of mRNA maturation, as well as other cellular activities, such as chromatin reorganization in somatic and sperm cells and cell cycle progression. Phosphorylates SFRS2, ZRSR2, LBR and PRM1. Phosphorylates SRSF1 using a directional (C-terminal to N-terminal) and a dual-track mechanism incorporating both processive phosphorylation (in which the kinase stays attached to the substrate after each round of phosphorylation) and distributive phosphorylation steps (in which the kinase and substrate dissociate after each phosphorylation event). The RS domain of SRSF1 binds first to a docking groove in the large lobe of the kinase domain of SRPK1. This induces certain structural changes in SRPK1 and/or RRM2 domain of SRSF1, allowing RRM2 to bind the kinase and initiate phosphorylation. The cycles continue for several phosphorylation steps in a processive manner (steps 1-8) until the last few phosphorylation steps (approximately steps 9-12). During that time, a mechanical stress induces the unfolding of the beta-4 motif in RRM2, which then docks at the docking groove of SRPK1. This also signals RRM2 to begin to dissociate, which facilitates SRSF1 dissociation after phosphorylation is completed. Can mediate hepatitis B virus (HBV) core protein phosphorylation. It plays a negative role in the regulation of HBV replication through a mechanism not involving the phosphorylation of the core protein but by reducing the packaging efficiency of the pregenomic RNA (pgRNA) without affecting the formation of the viral core particles. Can induce splicing of exon 10 in MAPT/TAU. This Pongo abelii (Sumatran orangutan) protein is SRSF protein kinase 1.